We begin with the raw amino-acid sequence, 412 residues long: Imidazolonepropionase (412 aa).

Residues His76 and His78 each coordinate Fe(3+). 2 residues coordinate Zn(2+): His76 and His78. Positions 85, 148, and 181 each coordinate 4-imidazolone-5-propanoate. Residue Tyr148 coordinates N-formimidoyl-L-glutamate. Residue His242 coordinates Fe(3+). Residue His242 coordinates Zn(2+). Position 245 (Glu245) interacts with 4-imidazolone-5-propanoate. Asp317 is a Fe(3+) binding site. A Zn(2+)-binding site is contributed by Asp317. N-formimidoyl-L-glutamate-binding residues include Asn319 and Gly321. Residue Ser322 participates in 4-imidazolone-5-propanoate binding.

It belongs to the metallo-dependent hydrolases superfamily. HutI family. It depends on Zn(2+) as a cofactor. Fe(3+) is required as a cofactor.

Its subcellular location is the cytoplasm. The enzyme catalyses 4-imidazolone-5-propanoate + H2O = N-formimidoyl-L-glutamate. It participates in amino-acid degradation; L-histidine degradation into L-glutamate; N-formimidoyl-L-glutamate from L-histidine: step 3/3. Functionally, catalyzes the hydrolytic cleavage of the carbon-nitrogen bond in imidazolone-5-propanoate to yield N-formimidoyl-L-glutamate. It is the third step in the universal histidine degradation pathway. In Staphylococcus aureus (strain bovine RF122 / ET3-1), this protein is Imidazolonepropionase.